A 129-amino-acid chain; its full sequence is Capsid protein (129 aa).

Positions Glu-31 to Ile-104 are viral RNA-binding.

The protein belongs to the Leviviricetes capsid protein family. As to quaternary structure, homodimer. The capsid proteins form dimers that assemble by group of 5. Twelve such pentamers are linked together with free dimers. The homodimers binds to the viral RNA via an operator hairpin, but also to many other RNA sequences in the viral genome; this interaction probably shifts the virus from the replicative to the assembly phase and ensures specific encapsidation of the viral genome.

Its subcellular location is the virion. Its function is as follows. Capsid protein self-assembles to form an icosahedral capsid with a T=3 symmetry, about 26 nm in diameter, and consisting of 89 capsid proteins dimers (178 capsid proteins). Involved in viral genome encapsidation through the interaction between a capsid protein dimer and the multiple packaging signals present in the RNA genome. The capsid also contains 1 copy of the A2 maturation protein. Acts as a translational repressor of viral replicase synthesis late in infection. This latter function is the result of capsid protein interaction with an RNA hairpin which contains the replicase ribosome-binding site. This Enterobacteria phage f2 (Bacteriophage f2) protein is Capsid protein.